We begin with the raw amino-acid sequence, 1004 residues long: UPF0182 protein Mflv_4654 (1004 aa).

7 consecutive transmembrane segments (helical) span residues 18 to 38 (FLIAVSAVLVLLLLLGPRFID), 63 to 83 (LVIFFVVAILVGAVVFAGLAL), 114 to 134 (LIGIGVPLAIGVLAGFVGQSY), 176 to 196 (FVGVFLAFLANLLGHYLFGGI), 211 to 231 (IQLITLVGLLMLLKAVAYWFD), 260 to 280 (KLILMAIAVICAVAVFSAIFL), and 288 to 308 (IGVVLLLLSSLVVGAGWPLVV). The span at 896–940 (PGADATATGPAATEPPAGQAPQTQGNNTAPPAAQPPNRQGQAPAG) shows a compositional bias: low complexity. Positions 896–960 (PGADATATGP…TGPTQLSAAK (65 aa)) are disordered.

It belongs to the UPF0182 family.

It is found in the cell membrane. The polypeptide is UPF0182 protein Mflv_4654 (Mycolicibacterium gilvum (strain PYR-GCK) (Mycobacterium gilvum (strain PYR-GCK))).